The following is a 443-amino-acid chain: Carbohydrate sulfotransferase 9 (443 aa).

Residues 1 to 12 (MQPSEMVMNPKQ) lie on the Cytoplasmic side of the membrane. The helical; Signal-anchor for type II membrane protein transmembrane segment at 13 to 33 (VFLSVLIFGVAGLLLFMYLQV) threads the bilayer. Residues 34–443 (WIEEQHTGRV…LMFNYTTPFL (410 aa)) are Lumenal-facing. A compositionally biased stretch (polar residues) spans 108 to 128 (LTKTSHSQGGDQALSKSTGSP). Residues 108-132 (LTKTSHSQGGDQALSKSTGSPTEKL) are disordered. N-linked (GlcNAc...) asparagine glycosylation is present at asparagine 159. Position 220-226 (220-226 (PKAGCSN)) interacts with 3'-phosphoadenylyl sulfate. N-linked (GlcNAc...) asparagine glycosylation is present at asparagine 243. 280–288 (RDPMERLVS) provides a ligand contact to 3'-phosphoadenylyl sulfate. 2 N-linked (GlcNAc...) asparagine glycosylation sites follow: asparagine 324 and asparagine 437.

The protein belongs to the sulfotransferase 2 family. Highly expressed in trachea. Also expressed in fetal lung, adult pancreas, testis and salivary gland. Expressed at low level in pituitary gland, apex of the heart, adult lung, prostate and mammary gland. Weakly or not expressed in heart, liver and spinal cord.

The protein resides in the golgi apparatus membrane. Its subcellular location is the secreted. Functionally, catalyzes the transfer of sulfate to position 4 of non-reducing N-acetylgalactosamine (GalNAc) residues in both N-glycans and O-glycans. Participates in biosynthesis of glycoprotein hormones lutropin and thyrotropin, by mediating sulfation of their carbohydrate structures. Has a higher activity toward carbonic anhydrase VI than toward lutropin. Only active against terminal GalNAcbeta1,GalNAcbeta. Isoform 2, but not isoform 1, is active toward chondroitin. This chain is Carbohydrate sulfotransferase 9 (CHST9), found in Homo sapiens (Human).